The primary structure comprises 660 residues: Cysteine--tRNA ligase, cytoplasmic (660 aa).

A compositionally biased stretch (polar residues) spans 1–10 (MSENSSPKLE). The disordered stretch occupies residues 1–20 (MSENSSPKLESTSAAAASTK). Residue C65 coordinates Zn(2+). The 'HIGH' region motif lies at 67 to 77 (PTVYDASHMGH). C256, H281, and E285 together coordinate Zn(2+). The 'KMSKS' region signature appears at 314 to 318 (KMSKS). K317 is an ATP binding site. Disordered regions lie at residues 563–584 (IEKKKQADKEEKEKKLKEKFEK) and 627–660 (QKEYDNQTKEHNNYLKSLSTSTSSPTLTSTQSPQ). Residues 627-639 (QKEYDNQTKEHNN) are compositionally biased toward basic and acidic residues. The segment covering 643-660 (SLSTSTSSPTLTSTQSPQ) has biased composition (low complexity).

Belongs to the class-I aminoacyl-tRNA synthetase family. The cofactor is Zn(2+).

It is found in the cytoplasm. It catalyses the reaction tRNA(Cys) + L-cysteine + ATP = L-cysteinyl-tRNA(Cys) + AMP + diphosphate. The chain is Cysteine--tRNA ligase, cytoplasmic (cysS) from Dictyostelium discoideum (Social amoeba).